The sequence spans 314 residues: Hydroxyethylthiazole kinase (314 aa).

Low complexity predominate over residues 1–13; that stretch reads MSNSASSFADVSS. The disordered stretch occupies residues 1-24; sequence MSNSASSFADVSSGCTAGTPVPAD. Residue methionine 70 participates in substrate binding. The ATP site is built by arginine 145 and serine 217. Residue glycine 244 coordinates substrate.

This sequence belongs to the Thz kinase family. Mg(2+) serves as cofactor.

The catalysed reaction is 5-(2-hydroxyethyl)-4-methylthiazole + ATP = 4-methyl-5-(2-phosphooxyethyl)-thiazole + ADP + H(+). It participates in cofactor biosynthesis; thiamine diphosphate biosynthesis; 4-methyl-5-(2-phosphoethyl)-thiazole from 5-(2-hydroxyethyl)-4-methylthiazole: step 1/1. In terms of biological role, catalyzes the phosphorylation of the hydroxyl group of 4-methyl-5-beta-hydroxyethylthiazole (THZ). The protein is Hydroxyethylthiazole kinase of Bifidobacterium longum subsp. infantis (strain ATCC 15697 / DSM 20088 / JCM 1222 / NCTC 11817 / S12).